The sequence spans 618 residues: Uptake hydrogenase large subunit (618 aa).

Cysteine 75, cysteine 78, cysteine 597, and cysteine 600 together coordinate Ni(2+).

This sequence belongs to the [NiFe]/[NiFeSe] hydrogenase large subunit family. As to quaternary structure, heterodimer of a large and a small subunit. The cofactor is Ni(2+).

The protein resides in the cell membrane. The catalysed reaction is H2 + A = AH2. Functionally, this enzyme recycles the H(2) produced by nitrogenase to increase the production of ATP and to protect nitrogenase against inhibition or damage by O(2) under carbon- or phosphate-limited conditions. The polypeptide is Uptake hydrogenase large subunit (hupB) (Rubrivivax gelatinosus (Rhodocyclus gelatinosus)).